Reading from the N-terminus, the 402-residue chain is GTPase HflX (402 aa).

Positions 181–350 (DTVGLIGYTN…MIIEHLNLSI (170 aa)) constitute a Hflx-type G domain. GTP is bound by residues 187–194 (GYTNAGKT), 212–216 (FTTLT), 233–236 (DTVG), 300–303 (NKVD), and 328–330 (SAK). Mg(2+) is bound by residues Thr-194 and Thr-214.

It belongs to the TRAFAC class OBG-HflX-like GTPase superfamily. HflX GTPase family. Monomer. Associates with the 50S ribosomal subunit. Requires Mg(2+) as cofactor.

The protein localises to the cytoplasm. Its function is as follows. GTPase that associates with the 50S ribosomal subunit and may have a role during protein synthesis or ribosome biogenesis. This chain is GTPase HflX, found in Methanocaldococcus jannaschii (strain ATCC 43067 / DSM 2661 / JAL-1 / JCM 10045 / NBRC 100440) (Methanococcus jannaschii).